The following is a 79-amino-acid chain: Large ribosomal subunit protein bL28 (79 aa).

This sequence belongs to the bacterial ribosomal protein bL28 family.

In Blochmanniella floridana, this protein is Large ribosomal subunit protein bL28.